A 335-amino-acid chain; its full sequence is Putative type I specificity subunit S.MpnORF89P (335 aa).

This sequence belongs to the type-I restriction system S methylase family. In terms of assembly, the methyltransferase is composed of M and S polypeptides.

In terms of biological role, the specificity (S) subunit of a type I methyltransferase (MTase); this subunit dictates DNA sequence specificity. The single R subunit has multiple frameshifts and is probably not expressed. In Mycoplasma pneumoniae (strain ATCC 29342 / M129 / Subtype 1) (Mycoplasmoides pneumoniae), this protein is Putative type I specificity subunit S.MpnORF89P.